The chain runs to 871 residues: Isoleucine--tRNA ligase (871 aa).

A 'HIGH' region motif is present at residues 57–67 (PYANGNLHMGH). Glutamate 554 lines the L-isoleucyl-5'-AMP pocket. The short motif at 595 to 599 (KMSKS) is the 'KMSKS' region element. Lysine 598 lines the ATP pocket.

This sequence belongs to the class-I aminoacyl-tRNA synthetase family. IleS type 1 subfamily. In terms of assembly, monomer.

It localises to the cytoplasm. The catalysed reaction is tRNA(Ile) + L-isoleucine + ATP = L-isoleucyl-tRNA(Ile) + AMP + diphosphate. Catalyzes the attachment of isoleucine to tRNA(Ile). As IleRS can inadvertently accommodate and process structurally similar amino acids such as valine, to avoid such errors it has two additional distinct tRNA(Ile)-dependent editing activities. One activity is designated as 'pretransfer' editing and involves the hydrolysis of activated Val-AMP. The other activity is designated 'posttransfer' editing and involves deacylation of mischarged Val-tRNA(Ile). In Staphylococcus epidermidis, this protein is Isoleucine--tRNA ligase.